The chain runs to 360 residues: Photosystem II protein D1 (360 aa).

The next 3 membrane-spanning stretches (helical) occupy residues Tyr-29–Ser-46, His-118–Leu-133, and Trp-142–Ala-156. His-118 lines the chlorophyll a pocket. Trp-126 is a pheophytin a binding site. Residues Asp-170 and Glu-189 each coordinate [CaMn4O5] cluster. Residues Phe-197–Leu-218 traverse the membrane as a helical segment. His-198 contributes to the chlorophyll a binding site. Residues His-215 and Ser-264–Phe-265 contribute to the a quinone site. Residue His-215 coordinates Fe cation. His-272 serves as a coordination point for Fe cation. A helical membrane pass occupies residues Phe-274–Leu-288. 4 residues coordinate [CaMn4O5] cluster: His-332, Glu-333, Asp-342, and Ala-344. A propeptide spanning residues Ser-345 to Gly-360 is cleaved from the precursor.

The protein belongs to the reaction center PufL/M/PsbA/D family. As to quaternary structure, PSII is composed of 1 copy each of membrane proteins PsbA, PsbB, PsbC, PsbD, PsbE, PsbF, PsbH, PsbI, PsbJ, PsbK, PsbL, PsbM, PsbT, PsbX, PsbY, PsbZ, Psb30/Ycf12, at least 3 peripheral proteins of the oxygen-evolving complex and a large number of cofactors. It forms dimeric complexes. The D1/D2 heterodimer binds P680, chlorophylls that are the primary electron donor of PSII, and subsequent electron acceptors. It shares a non-heme iron and each subunit binds pheophytin, quinone, additional chlorophylls, carotenoids and lipids. D1 provides most of the ligands for the Mn4-Ca-O5 cluster of the oxygen-evolving complex (OEC). There is also a Cl(-1) ion associated with D1 and D2, which is required for oxygen evolution. The PSII complex binds additional chlorophylls, carotenoids and specific lipids. is required as a cofactor. In terms of processing, tyr-161 forms a radical intermediate that is referred to as redox-active TyrZ, YZ or Y-Z. Post-translationally, C-terminally processed by CTPA; processing is essential to allow assembly of the oxygen-evolving complex and thus photosynthetic growth.

It is found in the plastid. Its subcellular location is the chloroplast thylakoid membrane. The enzyme catalyses 2 a plastoquinone + 4 hnu + 2 H2O = 2 a plastoquinol + O2. Functionally, photosystem II (PSII) is a light-driven water:plastoquinone oxidoreductase that uses light energy to abstract electrons from H(2)O, generating O(2) and a proton gradient subsequently used for ATP formation. It consists of a core antenna complex that captures photons, and an electron transfer chain that converts photonic excitation into a charge separation. The D1/D2 (PsbA/PsbD) reaction center heterodimer binds P680, the primary electron donor of PSII as well as several subsequent electron acceptors. The polypeptide is Photosystem II protein D1 (Ectocarpus siliculosus (Brown alga)).